A 355-amino-acid polypeptide reads, in one-letter code: Heat-inducible transcription repressor HrcA (355 aa).

Belongs to the HrcA family.

Its function is as follows. Negative regulator of class I heat shock genes (grpE-dnaK-dnaJ and groELS operons). Prevents heat-shock induction of these operons. The polypeptide is Heat-inducible transcription repressor HrcA (Nitratidesulfovibrio vulgaris (strain ATCC 29579 / DSM 644 / CCUG 34227 / NCIMB 8303 / VKM B-1760 / Hildenborough) (Desulfovibrio vulgaris)).